A 968-amino-acid polypeptide reads, in one-letter code: RNA polymerase-associated protein RapA (968 aa).

The Helicase ATP-binding domain maps to 164–334 (DVGRRHAPRV…FARLRLLDPN (171 aa)). ATP is bound at residue 177–184 (DEVGLGKT). Positions 280 to 283 (DEAH) match the DEAH box motif. Residues 490 to 644 (RVEWLMGYLT…TCPTGRAIYD (155 aa)) form the Helicase C-terminal domain.

The protein belongs to the SNF2/RAD54 helicase family. RapA subfamily. In terms of assembly, interacts with the RNAP. Has a higher affinity for the core RNAP than for the holoenzyme. Its ATPase activity is stimulated by binding to RNAP.

Its function is as follows. Transcription regulator that activates transcription by stimulating RNA polymerase (RNAP) recycling in case of stress conditions such as supercoiled DNA or high salt concentrations. Probably acts by releasing the RNAP, when it is trapped or immobilized on tightly supercoiled DNA. Does not activate transcription on linear DNA. Probably not involved in DNA repair. The protein is RNA polymerase-associated protein RapA of Salmonella arizonae (strain ATCC BAA-731 / CDC346-86 / RSK2980).